The following is a 178-amino-acid chain: Cysteine-rich venom protein VAR3 (178 aa).

The N-terminal stretch at 1–22 (MILLKLYLTLAAILCQSRGTTS) is a signal peptide. The 129-residue stretch at 41 to 169 (NKHNDLRRTV…PLKYFLVCQY (129 aa)) folds into the SCP domain. 3 disulfides stabilise this stretch: Cys77-Cys156, Cys95-Cys170, and Cys151-Cys167.

It belongs to the CRISP family. In terms of processing, contains 8 disulfide bonds. In terms of tissue distribution, expressed by the venom gland.

The protein localises to the secreted. Blocks ryanodine receptors, and potassium channels. In Varanus acanthurus (Ridge-tailed monitor), this protein is Cysteine-rich venom protein VAR3.